The primary structure comprises 159 residues: MDIRTGNGFDVHAFGPGDHVWLCGVRVPHHRGLIGHSDADVGMHALTDAIYGALAEGDIGVHFPPSDPQWKGAASRIFLEHAMGRIAARGFTLANCDVTLICERPKIGPMAPAMREALAAIMGVEVGRISVKATTSEKLGFTGREEGIACIATATLLQA.

2 residues coordinate a divalent metal cation: D10 and H12. Residues 10–12 (DVH) and 36–37 (HS) contribute to the 4-CDP-2-C-methyl-D-erythritol 2-phosphate site. Residue H44 coordinates a divalent metal cation. 4-CDP-2-C-methyl-D-erythritol 2-phosphate is bound by residues 58–60 (DIG), 134–137 (TTSE), F141, and R144.

This sequence belongs to the IspF family. In terms of assembly, homotrimer. It depends on a divalent metal cation as a cofactor.

The enzyme catalyses 4-CDP-2-C-methyl-D-erythritol 2-phosphate = 2-C-methyl-D-erythritol 2,4-cyclic diphosphate + CMP. Its pathway is isoprenoid biosynthesis; isopentenyl diphosphate biosynthesis via DXP pathway; isopentenyl diphosphate from 1-deoxy-D-xylulose 5-phosphate: step 4/6. Functionally, involved in the biosynthesis of isopentenyl diphosphate (IPP) and dimethylallyl diphosphate (DMAPP), two major building blocks of isoprenoid compounds. Catalyzes the conversion of 4-diphosphocytidyl-2-C-methyl-D-erythritol 2-phosphate (CDP-ME2P) to 2-C-methyl-D-erythritol 2,4-cyclodiphosphate (ME-CPP) with a corresponding release of cytidine 5-monophosphate (CMP). The protein is 2-C-methyl-D-erythritol 2,4-cyclodiphosphate synthase of Cereibacter sphaeroides (strain ATCC 17025 / ATH 2.4.3) (Rhodobacter sphaeroides).